A 702-amino-acid chain; its full sequence is Cell adhesion molecule CEACAM5 (702 aa).

A signal peptide spans 1-34 (MESPSAPPHRWCIPWQRLLLTASLLTFWNPPTTA). The Ig-like V-type domain occupies 35 to 144 (KLTIESTPFN…TGQFRVYPEL (110 aa)). Residues N104, N115, N152, N182, N197, N204, N208, N246, N256, N274, N288, N292, N309, N330, N351, N360, N375, N432, N466, N480, N508, N529, N553, N560, N580, N612, N650, and N665 are each glycosylated (N-linked (GlcNAc...) asparagine). 6 Ig-like C2-type domains span residues 145–232 (PKPS…VILN), 240–315 (PTIS…TVTT), 323–410 (PKPF…VILN), 418–495 (PTIS…KTIT), 501–588 (PKPS…VTLD), and 593–675 (PDTP…ITVS). A disulfide bridge connects residues C167 and C215. C259 and C299 are oxidised to a cystine. Cysteines 345 and 393 form a disulfide. Cysteines 437 and 477 form a disulfide. Residues C523 and C571 are joined by a disulfide bond. The cysteines at positions 615 and 655 are disulfide-linked. A685 is lipidated: GPI-anchor amidated alanine. The propeptide at 686–702 (GATVGIMIGVLVGVALI) is removed in mature form.

The protein belongs to the immunoglobulin superfamily. CEA family. In terms of assembly, homodimer. Complex immunoreactive glycoprotein with a MW of 180 kDa comprising 60% carbohydrate. In terms of tissue distribution, expressed in columnar epithelial and goblet cells of the colon (at protein level). Found in adenocarcinomas of endodermally derived digestive system epithelium and fetal colon.

The protein resides in the cell membrane. It is found in the apical cell membrane. Its subcellular location is the cell surface. Its function is as follows. Cell surface glycoprotein that plays a role in cell adhesion, intracellular signaling and tumor progression. Mediates homophilic and heterophilic cell adhesion with other carcinoembryonic antigen-related cell adhesion molecules, such as CEACAM6. Plays a role as an oncogene by promoting tumor progression; induces resistance to anoikis of colorectal carcinoma cells. In terms of biological role, (Microbial infection) Receptor for E.coli Dr adhesins. Binding of E.coli Dr adhesins leads to dissociation of the homodimer. The protein is Cell adhesion molecule CEACAM5 of Homo sapiens (Human).